A 433-amino-acid chain; its full sequence is Isocitrate dehydrogenase [NADP], chloroplastic (433 aa).

The N-terminal 21 residues, 1-21 (QFSPNLSFSAFFPIITFTTAT), are a transit peptide targeting the chloroplast. Residues 98–100 (TIT) and Arg105 each bind NADP(+). Position 100 (Thr100) interacts with substrate. Residues 117-123 (SPNGTIR), Arg132, and Arg155 contribute to the substrate site. Residue Asp275 coordinates Mn(2+). NADP(+) is bound at residue Lys283. Residue Asp298 coordinates Mn(2+). Residues 333–338 (GTVTRH) and Asn351 each bind NADP(+).

The protein belongs to the isocitrate and isopropylmalate dehydrogenases family. Mg(2+) is required as a cofactor. It depends on Mn(2+) as a cofactor. Detected in all tissues examined.

It is found in the plastid. It localises to the chloroplast. It catalyses the reaction D-threo-isocitrate + NADP(+) = 2-oxoglutarate + CO2 + NADPH. The protein is Isocitrate dehydrogenase [NADP], chloroplastic of Medicago sativa (Alfalfa).